Consider the following 436-residue polypeptide: Chorismate synthase, chloroplastic (436 aa).

Residues 1 to 24 (MASSSLTSKSILGSTKLGSSSLPS) are disordered. The transit peptide at 1–50 (MASSSLTSKSILGSTKLGSSSLPSELRRLSSPAVQISLRTQTRKNFQIQA) directs the protein to the chloroplast.

This sequence belongs to the chorismate synthase family. In terms of assembly, homotetramer. The cofactor is FMNH2.

The protein resides in the plastid. It is found in the chloroplast. The catalysed reaction is 5-O-(1-carboxyvinyl)-3-phosphoshikimate = chorismate + phosphate. The protein operates within metabolic intermediate biosynthesis; chorismate biosynthesis; chorismate from D-erythrose 4-phosphate and phosphoenolpyruvate: step 7/7. Functionally, catalyzes the last common step of the biosynthesis of aromatic amino acids, produced via the shikimic acid pathway. The chain is Chorismate synthase, chloroplastic (EMB1144) from Arabidopsis thaliana (Mouse-ear cress).